The chain runs to 411 residues: Tyrosine--tRNA ligase (411 aa).

Residue Tyr34 participates in L-tyrosine binding. Residues 39–48 (CTATSLHIGS) carry the 'HIGH' region motif. Residues Tyr171 and Gln175 each coordinate L-tyrosine. The short motif at 231–235 (KMGKT) is the 'KMSKS' region element. Lys234 lines the ATP pocket. The S4 RNA-binding domain maps to 345 to 411 (ISAYNLFYNA…GKKRHILVKV (67 aa)).

It belongs to the class-I aminoacyl-tRNA synthetase family. TyrS type 1 subfamily. In terms of assembly, homodimer.

The protein localises to the cytoplasm. It carries out the reaction tRNA(Tyr) + L-tyrosine + ATP = L-tyrosyl-tRNA(Tyr) + AMP + diphosphate + H(+). Catalyzes the attachment of tyrosine to tRNA(Tyr) in a two-step reaction: tyrosine is first activated by ATP to form Tyr-AMP and then transferred to the acceptor end of tRNA(Tyr). This Rickettsia prowazekii (strain Madrid E) protein is Tyrosine--tRNA ligase.